The following is an 88-amino-acid chain: LYR motif-containing protein 2 (88 aa).

A mitochondrion-targeting transit peptide spans 1–19 (MAASRLPPATLTLKQFMRR).

Belongs to the complex I LYR family.

The protein localises to the mitochondrion. In terms of biological role, involved in efficient integration of the N-module into mitochondrial respiratory chain complex I. The polypeptide is LYR motif-containing protein 2 (Lyrm2) (Rattus norvegicus (Rat)).